The sequence spans 475 residues: Trifunctional enzyme subunit beta, mitochondrial (475 aa).

The transit peptide at 1-34 (MTTILTCPFKKLPTTSKWALRFAIRPLSCSSQLR) directs the protein to the mitochondrion. Lysine 73 carries the N6-acetyllysine; alternate modification. Lysine 73 carries the post-translational modification N6-succinyllysine; alternate. Catalysis depends on cysteine 139, which acts as the Acyl-thioester intermediate. Residues 174-221 (IRHSRKMRKLMLDLNKAKSMGQRLSLISKFRLNFLAPELPAVAEFSTS) lie within the membrane without spanning it. Lysine 189 carries the post-translational modification N6-acetyllysine; alternate. At lysine 189 the chain carries N6-succinyllysine; alternate. An N6-succinyllysine mark is found at lysine 191, lysine 273, and lysine 292. At lysine 294 the chain carries N6-acetyllysine; alternate. The residue at position 294 (lysine 294) is an N6-succinyllysine; alternate. Lysine 299 bears the N6-acetyllysine mark. Lysine 333 is subject to N6-acetyllysine; alternate. Residue lysine 333 is modified to N6-succinyllysine; alternate. Residues lysine 349 and lysine 362 each carry the N6-acetyllysine modification. Catalysis depends on cysteine 459, which acts as the Proton donor/acceptor.

The protein belongs to the thiolase-like superfamily. Thiolase family. Heterotetramer of 2 alpha/HADHA and 2 beta/HADHB subunits; forms the mitochondrial trifunctional enzyme. Also purified as higher order heterooligomers including a 4 alpha/HADHA and 4 beta/HADHB heterooligomer which physiological significance remains unclear. The mitochondrial trifunctional enzyme interacts with MTLN. Interacts with RSAD2/viperin.

It is found in the mitochondrion. The protein resides in the mitochondrion inner membrane. Its subcellular location is the mitochondrion outer membrane. The protein localises to the endoplasmic reticulum. The catalysed reaction is an acyl-CoA + acetyl-CoA = a 3-oxoacyl-CoA + CoA. It carries out the reaction butanoyl-CoA + acetyl-CoA = 3-oxohexanoyl-CoA + CoA. The enzyme catalyses hexanoyl-CoA + acetyl-CoA = 3-oxooctanoyl-CoA + CoA. It catalyses the reaction octanoyl-CoA + acetyl-CoA = 3-oxodecanoyl-CoA + CoA. The catalysed reaction is decanoyl-CoA + acetyl-CoA = 3-oxododecanoyl-CoA + CoA. It carries out the reaction dodecanoyl-CoA + acetyl-CoA = 3-oxotetradecanoyl-CoA + CoA. The enzyme catalyses tetradecanoyl-CoA + acetyl-CoA = 3-oxohexadecanoyl-CoA + CoA. It participates in lipid metabolism; fatty acid beta-oxidation. In terms of biological role, mitochondrial trifunctional enzyme catalyzes the last three of the four reactions of the mitochondrial beta-oxidation pathway. The mitochondrial beta-oxidation pathway is the major energy-producing process in tissues and is performed through four consecutive reactions breaking down fatty acids into acetyl-CoA. Among the enzymes involved in this pathway, the trifunctional enzyme exhibits specificity for long-chain fatty acids. Mitochondrial trifunctional enzyme is a heterotetrameric complex composed of two proteins, the trifunctional enzyme subunit alpha/HADHA carries the 2,3-enoyl-CoA hydratase and the 3-hydroxyacyl-CoA dehydrogenase activities, while the trifunctional enzyme subunit beta/HADHB described here bears the 3-ketoacyl-CoA thiolase activity. This Macaca fascicularis (Crab-eating macaque) protein is Trifunctional enzyme subunit beta, mitochondrial (HADHB).